The chain runs to 381 residues: Chaperone protein DnaJ (381 aa).

One can recognise a J domain in the interval 5 to 70 (DYYDVLGVSK…EKKAAYDRFG (66 aa)). Residues 140–218 (GLQKTINVPT…CRGQGRVEKD (79 aa)) form a CR-type zinc finger. Zn(2+) is bound by residues Cys-153, Cys-156, Cys-170, Cys-173, Cys-192, Cys-195, Cys-206, and Cys-209. CXXCXGXG motif repeat units lie at residues 153 to 160 (CSSCEGTG), 170 to 177 (CPTCSGMG), 192 to 199 (CPTCSGLG), and 206 to 213 (CKSCRGQG).

The protein belongs to the DnaJ family. Homodimer. Zn(2+) serves as cofactor.

Its subcellular location is the cytoplasm. Its function is as follows. Participates actively in the response to hyperosmotic and heat shock by preventing the aggregation of stress-denatured proteins and by disaggregating proteins, also in an autonomous, DnaK-independent fashion. Unfolded proteins bind initially to DnaJ; upon interaction with the DnaJ-bound protein, DnaK hydrolyzes its bound ATP, resulting in the formation of a stable complex. GrpE releases ADP from DnaK; ATP binding to DnaK triggers the release of the substrate protein, thus completing the reaction cycle. Several rounds of ATP-dependent interactions between DnaJ, DnaK and GrpE are required for fully efficient folding. Also involved, together with DnaK and GrpE, in the DNA replication of plasmids through activation of initiation proteins. This Ruegeria pomeroyi (strain ATCC 700808 / DSM 15171 / DSS-3) (Silicibacter pomeroyi) protein is Chaperone protein DnaJ.